The following is a 338-amino-acid chain: Ferredoxin--NADP reductase (338 aa).

The FAD site is built by aspartate 35, glutamine 43, tyrosine 48, alanine 88, phenylalanine 122, aspartate 289, and threonine 330.

It belongs to the ferredoxin--NADP reductase type 2 family. In terms of assembly, homodimer. FAD is required as a cofactor.

The enzyme catalyses 2 reduced [2Fe-2S]-[ferredoxin] + NADP(+) + H(+) = 2 oxidized [2Fe-2S]-[ferredoxin] + NADPH. In Ehrlichia canis (strain Jake), this protein is Ferredoxin--NADP reductase.